Reading from the N-terminus, the 1663-residue chain is Cortactin-binding protein 2 (1663 aa).

Disordered stretches follow at residues 1-23 (MATD…AGAA), 203-222 (KKKT…RSTE), 359-440 (QASH…LHPG), 454-478 (GNAN…SPTS), and 498-617 (RFTS…KPSI). The stretch at 119–276 (KKMQERMSAQ…EQLKRGSDSK (158 aa)) forms a coiled coil. Residues 386 to 396 (PSTGSTPDPTS) are compositionally biased toward low complexity. The residue at position 498 (R498) is an Asymmetric dimethylarginine. Residues 583–593 (TVASPPSSLPQ) are compositionally biased toward polar residues. 6 ANK repeats span residues 709 to 739 (GRPT…DINY), 743 to 772 (DGHS…QVNA), 776 to 805 (NGFT…NINH), 809 to 838 (GGQT…NRSV), 842 to 871 (DGWT…PARG), and 912 to 942 (EGWT…EPER). The tract at residues 1446 to 1485 (NKKKGESGAWRKVNTSPRRKSGRFSLPTWNKPDLSTEGMK) is disordered. At S1524 the chain carries Phosphoserine. The segment at 1580–1663 (SQKEVSPLSS…KNEHLEKPNK (84 aa)) is disordered. The segment covering 1582–1599 (KEVSPLSSHQTTECSNSK) has biased composition (polar residues). The span at 1624–1638 (SQNTKRSSSSSNTRQ) shows a compositional bias: low complexity. The span at 1645-1663 (SKEENWNLHKNEHLEKPNK) shows a compositional bias: basic and acidic residues.

Interacts with CTTN/cortactin SH3 domain. Interacts with STRN, STRN4/zinedin and MOB4/phocein; this interactions mediate the association with the STRIPAK core complex and may regulate dendritic spine distribution of the STRIPAK complex in hippocampal neurons. Activation of glutamate receptors weakens the interaction with STRN and STRN4.

Its subcellular location is the cytoplasm. The protein resides in the cell cortex. It is found in the cell projection. It localises to the dendritic spine. Regulates the dendritic spine distribution of CTTN/cortactin in hippocampal neurons, and thus controls dendritic spinogenesis and dendritic spine maintenance. Associates with the striatin-interacting phosphatase and kinase (STRIPAK) core complex to regulate dendritic spine distribution of the STRIPAK complex in hippocampal neurons. The protein is Cortactin-binding protein 2 (CTTNBP2) of Pongo abelii (Sumatran orangutan).